Consider the following 361-residue polypeptide: Molybdenum import ATP-binding protein ModC (361 aa).

One can recognise an ABC transporter domain in the interval 1-228 (MLTINIEKQL…EQMRPWVPLQ (228 aa)). 31–38 (GRSGAGKT) is an ATP binding site. The region spanning 289–356 (RSSIRNVLKG…IKGVTMTQMD (68 aa)) is the Mop domain.

This sequence belongs to the ABC transporter superfamily. Molybdate importer (TC 3.A.1.8) family. In terms of assembly, the complex is composed of two ATP-binding proteins (ModC), two transmembrane proteins (ModB) and a solute-binding protein (ModA).

The protein localises to the cell inner membrane. The enzyme catalyses molybdate(out) + ATP + H2O = molybdate(in) + ADP + phosphate + H(+). Functionally, part of the ABC transporter complex ModABC involved in molybdenum import. Responsible for energy coupling to the transport system. This chain is Molybdenum import ATP-binding protein ModC, found in Shewanella oneidensis (strain ATCC 700550 / JCM 31522 / CIP 106686 / LMG 19005 / NCIMB 14063 / MR-1).